The primary structure comprises 535 residues: Dimethylaniline monooxygenase [N-oxide-forming] 2 (535 aa).

Ala2 carries the N-acetylalanine modification. FAD contacts are provided by residues 9–13, Glu32, 40–41, and 61–62; these read GAGVS, VW, and NT. NADP(+) is bound by residues 60–61 and 195–198; these read TN and SGSD. Residue Lys492 forms a Glycyl lysine isopeptide (Lys-Gly) (interchain with G-Cter in SUMO) linkage. Residues 510 to 530 form a helical membrane-spanning segment; the sequence is FPVSFLLKILGLVAVVVAFFC.

The protein belongs to the FMO family. FAD serves as cofactor. Requires Mg(2+) as cofactor.

It localises to the microsome membrane. The protein localises to the endoplasmic reticulum membrane. The catalysed reaction is N,N-dimethylaniline + NADPH + O2 + H(+) = N,N-dimethylaniline N-oxide + NADP(+) + H2O. Its function is as follows. Catalyzes the oxidative metabolism of numerous xenobiotics, including mainly therapeutic drugs and insecticides that contain a soft nucleophile, most commonly nitrogen and sulfur and participates to their bioactivation. This chain is Dimethylaniline monooxygenase [N-oxide-forming] 2, found in Macaca mulatta (Rhesus macaque).